A 481-amino-acid chain; its full sequence is METMPNWLMQRAFLTPDRTAIEIEEEKVTFVQLHEKVVSVCEHLTHVGVKRAQKVAVLMKNGMEMITVIHALSYIGAVAVLLNTRLSREELLWQMDDAEVVCLVTDQEFETENVPVCSFAEVMQGPKAEAFIQEEFSLEEAMTIIYTSGTTGKPKGVILTYGNHWASAVGSSLNLGLRDDDCWLACMPMFHVGGLSLLMKNIMYGMRILLVPKYDANFIHKALQTRGVTIISVVSKMLTDLLERLGEGTYPSSLRCMLLGGGPAPKPLLETCVEKGIPVYQTYGMTETSSQICTLTADYMLTKVGSAGKPLFQCQLRIEKDGVVVPPRAEGEIVVKGPNVTGGYFNREDATHEAIRNGWLHTGDLGYLDEEGFLYVLDRRSDLIISGGENIYPAQIEEVLLSHPAVVEAGVVGMADESWGQVPAAFVVKSGDVTEEEIIRFCEEKLAKYKVPKKACFLEELPRNASKKLLRRELRKLVEEM.

This sequence belongs to the ATP-dependent AMP-binding enzyme family. MenE subfamily.

The catalysed reaction is 2-succinylbenzoate + ATP + CoA = 2-succinylbenzoyl-CoA + AMP + diphosphate. Its pathway is quinol/quinone metabolism; 1,4-dihydroxy-2-naphthoate biosynthesis; 1,4-dihydroxy-2-naphthoate from chorismate: step 5/7. The protein operates within quinol/quinone metabolism; menaquinone biosynthesis. Its function is as follows. Converts 2-succinylbenzoate (OSB) to 2-succinylbenzoyl-CoA (OSB-CoA). This chain is 2-succinylbenzoate--CoA ligase, found in Bacillus mycoides (strain KBAB4) (Bacillus weihenstephanensis).